The sequence spans 256 residues: MNSLSLELNKEQEVLIISDVENSESIINQVKELSKTVTTSLSKEQQQIQNNFDHVIIISSKPFNSALISMYSNLLKKGGKLSIYQTNENETLVNSGMDFLIGGLVDFKATSNSTYKTIVHADKPSWDTNESSTINIPSTSSNNPWASIEGGDRINENDLVSENDKTSKPATTLDDCEVGKTKKACKNCTCGRAEEENQSKPKLTKEMIENPGVGSSCGNCSLGDAFRCGGCPYRGLPTFKVGEKIQLPDDFLVDDI.

Residues 1-136 (MNSLSLELNK…DTNESSTINI (136 aa)) form an N-terminal SAM-like domain region. Positions 126–148 (WDTNESSTINIPSTSSNNPWASI) are disordered. A compositionally biased stretch (low complexity) spans 131–144 (SSTINIPSTSSNNP). Positions 137–166 (PSTSSNNPWASIEGGDRINENDLVSENDKT) are linker. Residues cysteine 176, cysteine 185, cysteine 188, and cysteine 190 each contribute to the [2Fe-2S] cluster site. The interval 176–190 (CEVGKTKKACKNCTC) is fe-S binding site A. [4Fe-4S] cluster-binding residues include cysteine 217, cysteine 220, cysteine 228, and cysteine 231. Short sequence motifs (cx2C motif) lie at residues 217 to 220 (CGNC) and 228 to 231 (CGGC). Residues 217–231 (CGNCSLGDAFRCGGC) are fe-S binding site B.

The protein belongs to the anamorsin family. Monomer. [2Fe-2S] cluster serves as cofactor. [4Fe-4S] cluster is required as a cofactor.

The protein resides in the cytoplasm. It is found in the mitochondrion intermembrane space. Component of the cytosolic iron-sulfur (Fe-S) protein assembly (CIA) machinery. Required for the maturation of extramitochondrial Fe-S proteins. Part of an electron transfer chain functioning in an early step of cytosolic Fe-S biogenesis, facilitating the de novo assembly of a [4Fe-4S] cluster on the cytosolic Fe-S scaffold complex. Electrons are transferred from NADPH via a FAD- and FMN-containing diflavin oxidoreductase. Together with the diflavin oxidoreductase, also required for the assembly of the diferric tyrosyl radical cofactor of ribonucleotide reductase (RNR), probably by providing electrons for reduction during radical cofactor maturation in the catalytic small subunit. The chain is Anamorsin homolog (rsc43) from Dictyostelium discoideum (Social amoeba).